Consider the following 1597-residue polypeptide: Pentafunctional AROM polypeptide (1597 aa).

The segment at Met-1–Asn-384 is 3-dehydroquinate synthase. Residues Asp-44–Asn-46, Glu-81–Lys-84, Gly-114–Val-116, and Asp-119 contribute to the NAD(+) site. Arg-130 is a 7-phospho-2-dehydro-3-deoxy-D-arabino-heptonate binding site. Thr-139 to Thr-140 is an NAD(+) binding site. 7-phospho-2-dehydro-3-deoxy-D-arabino-heptonate is bound by residues Asp-146 and Lys-152. Lys-161 serves as a coordination point for NAD(+). Asn-162 contacts 7-phospho-2-dehydro-3-deoxy-D-arabino-heptonate. Residues Phe-179–Thr-182 and Asn-190 contribute to the NAD(+) site. Glu-194 provides a ligand contact to Zn(2+). Residues Glu-194 to Lys-197 and Lys-250 each bind 7-phospho-2-dehydro-3-deoxy-D-arabino-heptonate. The active-site Proton acceptor; for 3-dehydroquinate synthase activity is the Glu-260. 7-phospho-2-dehydro-3-deoxy-D-arabino-heptonate contacts are provided by residues Arg-264–Asn-268 and His-271. Position 271 (His-271) interacts with Zn(2+). His-275 acts as the Proton acceptor; for 3-dehydroquinate synthase activity in catalysis. His-287 and Lys-356 together coordinate 7-phospho-2-dehydro-3-deoxy-D-arabino-heptonate. Residue His-287 participates in Zn(2+) binding. Positions Val-397 to Val-842 are EPSP synthase. Catalysis depends on Cys-824, which acts as the For EPSP synthase activity. The tract at residues Ala-866–Ser-1057 is shikimate kinase. ATP is bound at residue Gly-872–Thr-879. Residues Leu-1058–Glu-1278 form a 3-dehydroquinase region. The active-site Proton acceptor; for 3-dehydroquinate dehydratase activity is the His-1181. Lys-1209 acts as the Schiff-base intermediate with substrate; for 3-dehydroquinate dehydratase activity in catalysis. The tract at residues Ser-1291–Thr-1597 is shikimate dehydrogenase.

This sequence in the N-terminal section; belongs to the sugar phosphate cyclases superfamily. Dehydroquinate synthase family. The protein in the 2nd section; belongs to the EPSP synthase family. It in the 3rd section; belongs to the shikimate kinase family. In the 4th section; belongs to the type-I 3-dehydroquinase family. This sequence in the C-terminal section; belongs to the shikimate dehydrogenase family. Homodimer. Zn(2+) serves as cofactor.

Its subcellular location is the cytoplasm. It carries out the reaction 7-phospho-2-dehydro-3-deoxy-D-arabino-heptonate = 3-dehydroquinate + phosphate. The catalysed reaction is 3-dehydroquinate = 3-dehydroshikimate + H2O. It catalyses the reaction shikimate + NADP(+) = 3-dehydroshikimate + NADPH + H(+). The enzyme catalyses shikimate + ATP = 3-phosphoshikimate + ADP + H(+). It carries out the reaction 3-phosphoshikimate + phosphoenolpyruvate = 5-O-(1-carboxyvinyl)-3-phosphoshikimate + phosphate. It functions in the pathway metabolic intermediate biosynthesis; chorismate biosynthesis; chorismate from D-erythrose 4-phosphate and phosphoenolpyruvate: step 2/7. The protein operates within metabolic intermediate biosynthesis; chorismate biosynthesis; chorismate from D-erythrose 4-phosphate and phosphoenolpyruvate: step 3/7. Its pathway is metabolic intermediate biosynthesis; chorismate biosynthesis; chorismate from D-erythrose 4-phosphate and phosphoenolpyruvate: step 4/7. It participates in metabolic intermediate biosynthesis; chorismate biosynthesis; chorismate from D-erythrose 4-phosphate and phosphoenolpyruvate: step 5/7. It functions in the pathway metabolic intermediate biosynthesis; chorismate biosynthesis; chorismate from D-erythrose 4-phosphate and phosphoenolpyruvate: step 6/7. Its function is as follows. The AROM polypeptide catalyzes 5 consecutive enzymatic reactions in prechorismate polyaromatic amino acid biosynthesis. This Blastomyces gilchristii (strain SLH14081) (Blastomyces dermatitidis) protein is Pentafunctional AROM polypeptide.